A 185-amino-acid polypeptide reads, in one-letter code: Vomeronasal secretory protein 2 (185 aa).

The N-terminal stretch at 1-19 is a signal peptide; that stretch reads MKSLLLTVTLSSLVATLQT. A disulfide bridge connects residues Cys-80 and Cys-172.

This sequence belongs to the calycin superfamily. Lipocalin family. Specifically expressed in vomeronasal and posterior glands of the nasal septum, the ducts of which open into the lumen of the vomeronasal organ.

It localises to the secreted. Transport of lipophilic molecules, possible pheromone-carrier. The polypeptide is Vomeronasal secretory protein 2 (Lcn4) (Mus musculus (Mouse)).